Here is a 314-residue protein sequence, read N- to C-terminus: MGVGRSARGRGGAASGVLLALAAALLAAGSASEYDYVSFQSDIGSYQSGRFYTKPPQCVDIPVDLRLCHNVGYKKMVLPNLLEHETMAEVKQQASSWVPLLNKNCHMGTQVFLCSLFAPVCLDRPIYPCRWLCEAVRDSCEPVMQFFGFYWPEMLKCDKFPEGDVCIAMTPPNTTEASKPQGTTVCPPCDNELKSEAIIEHLCASEFALRMKIKEVKKENGDKKIVPKKKKPLKLGPIKKKELKRLVLFLKNGADCPCHQLDNLSHNFLIMGRKVKSQYLLTAIHKWDKKNKEFKNFMKRMKNHECPTFQSVFK.

The N-terminal stretch at 1–31 (MGVGRSARGRGGAASGVLLALAAALLAAGSA) is a signal peptide. The 117-residue stretch at 53–169 (TKPPQCVDIP…FPEGDVCIAM (117 aa)) folds into the FZ domain. 5 disulfides stabilise this stretch: Cys58/Cys121, Cys68/Cys114, Cys105/Cys140, Cys129/Cys166, and Cys133/Cys157. N-linked (GlcNAc...) asparagine glycosylation is present at Asn173. 3 disulfides stabilise this stretch: Cys186–Cys256, Cys189–Cys258, and Cys203–Cys306. An NTR domain is found at 186 to 306 (CPPCDNELKS…FMKRMKNHEC (121 aa)).

Belongs to the secreted frizzled-related protein (sFRP) family. In terms of assembly, interacts with WNT8, WNT1, WNT2, WNT4 and FRZD6. Interacts with MYOC. As to expression, highly expressed in kidney and embryonic heart. Also highly expressed in the eye, where it is principally localized to the ciliary body and the lens epithelium. Weaker expression in heart, lung and brain. In the brain, is expressed exclusively in the choroid plexus.

Its subcellular location is the secreted. Its function is as follows. Soluble frizzled-related proteins (sFRPS) function as modulators of Wnt signaling through direct interaction with Wnts. They have a role in regulating cell growth and differentiation in specific cell types. SFRP1 decreases intracellular beta-catenin levels. Has antiproliferative effects on vascular cells, in vitro and in vivo, and can induce, in vivo, an angiogenic response. In vascular cell cycle, delays the G1 phase and entry into the S phase. In kidney development, inhibits tubule formation and bud growth in metanephroi. Inhibits WNT1/WNT4-mediated TCF-dependent transcription. This chain is Secreted frizzled-related protein 1, found in Mus musculus (Mouse).